Reading from the N-terminus, the 740-residue chain is Ion-translocating oxidoreductase complex subunit C (740 aa).

2 consecutive 4Fe-4S ferredoxin-type domains span residues G369 to Y397 and K407 to F436. The [4Fe-4S] cluster site is built by C377, C380, C383, C387, C416, C419, C422, and C426. Residues K602–P714 are disordered. Residues Q605–Q615 show a composition bias toward low complexity.

Belongs to the 4Fe4S bacterial-type ferredoxin family. RnfC subfamily. The complex is composed of six subunits: RsxA, RsxB, RsxC, RsxD, RsxE and RsxG. It depends on [4Fe-4S] cluster as a cofactor.

Its subcellular location is the cell inner membrane. Part of a membrane-bound complex that couples electron transfer with translocation of ions across the membrane. Required to maintain the reduced state of SoxR. The sequence is that of Ion-translocating oxidoreductase complex subunit C from Escherichia coli O17:K52:H18 (strain UMN026 / ExPEC).